Reading from the N-terminus, the 638-residue chain is Plasma kallikrein (638 aa).

The signal sequence occupies residues 1-19; the sequence is MILFNRVGYFVSLFATVSC. 4 consecutive Apple domains span residues 21–104, 111–194, 201–284, and 292–375; these read CMTQ…LKQC, CHRD…LKSC, CPMD…LLTC, and CHSK…LRLC. 18 disulfides stabilise this stretch: Cys-21-Cys-104, Cys-47-Cys-77, Cys-51-Cys-57, Cys-111-Cys-194, Cys-137-Cys-166, Cys-141-Cys-147, Cys-201-Cys-284, Cys-227-Cys-256, Cys-231-Cys-237, Cys-292-Cys-375, Cys-318-Cys-347, Cys-322-Cys-328, Cys-340-Cys-345, Cys-383-Cys-503, Cys-419-Cys-435, Cys-517-Cys-584, Cys-548-Cys-563, and Cys-574-Cys-602. N-linked (GlcNAc...) asparagine glycosylation is present at Asn-127. Residue Asn-215 is glycosylated (N-linked (GlcNAc...) asparagine). A glycan (N-linked (GlcNAc...) asparagine) is linked at Asn-308. The region spanning 391–626 is the Peptidase S1 domain; it reads IVGGTNASLG…YMDWILEKTQ (236 aa). Residue Asn-396 is glycosylated (N-linked (GlcNAc...) asparagine). Catalysis depends on charge relay system residues His-434 and Asp-483. A glycan (N-linked (GlcNAc...) asparagine) is linked at Asn-494. The Charge relay system role is filled by Ser-578.

Belongs to the peptidase S1 family. Plasma kallikrein subfamily. As to quaternary structure, forms a heterodimer with SERPINA5. The zymogen is activated by factor XIIa, which cleaves the molecule into a light chain, which contains the active site, and a heavy chain, which associates with HMW kininogen. These chains are linked by one or more disulfide bonds.

The protein localises to the secreted. It carries out the reaction Cleaves selectively Arg-|-Xaa and Lys-|-Xaa bonds, including Lys-|-Arg and Arg-|-Ser bonds in (human) kininogen to release bradykinin.. Its activity is regulated as follows. Inhibited by SERPINA5. The enzyme cleaves Lys-Arg and Arg-Ser bonds. It activates, in a reciprocal reaction, factor XII after its binding to a negatively charged surface. It also releases bradykinin from HMW kininogen and may also play a role in the renin-angiotensin system by converting prorenin into renin. The chain is Plasma kallikrein (Klkb1) from Mus musculus (Mouse).